The chain runs to 648 residues: DNA helicase/primase complex-associated protein (648 aa).

Positions 43–63 (LWPSDQNNTASPAGAKTDQPT) are disordered.

It belongs to the herpesviridae HEPA family. Associates with the primase and the helicase to form the helicase-primase complex. Interacts with the origin-binding protein. Interacts with the polymerase catalytic subunit.

Its subcellular location is the host nucleus. In terms of biological role, component of the helicase/primase complex. Unwinds the DNA at the replication forks and generates single-stranded DNA for both leading and lagging strand synthesis. The primase synthesizes short RNA primers on the lagging strand that the polymerase presumably elongates using dNTPs. The primase-associated factor has no known catalytic activity in the complex and may serve to facilitate the formation of the replisome by directly interacting with the origin-binding protein and the polymerase. The polypeptide is DNA helicase/primase complex-associated protein (UL8) (Amazona oratrix (yellow-headed parrot)).